The sequence spans 157 residues: SsrA-binding protein (157 aa).

Residues 136–151 (KRETEKKRDWSREKGR) show a composition bias toward basic and acidic residues. The interval 136–157 (KRETEKKRDWSREKGRLLRARG) is disordered.

The protein belongs to the SmpB family.

The protein resides in the cytoplasm. Required for rescue of stalled ribosomes mediated by trans-translation. Binds to transfer-messenger RNA (tmRNA), required for stable association of tmRNA with ribosomes. tmRNA and SmpB together mimic tRNA shape, replacing the anticodon stem-loop with SmpB. tmRNA is encoded by the ssrA gene; the 2 termini fold to resemble tRNA(Ala) and it encodes a 'tag peptide', a short internal open reading frame. During trans-translation Ala-aminoacylated tmRNA acts like a tRNA, entering the A-site of stalled ribosomes, displacing the stalled mRNA. The ribosome then switches to translate the ORF on the tmRNA; the nascent peptide is terminated with the 'tag peptide' encoded by the tmRNA and targeted for degradation. The ribosome is freed to recommence translation, which seems to be the essential function of trans-translation. The protein is SsrA-binding protein of Rhodopseudomonas palustris (strain HaA2).